A 439-amino-acid chain; its full sequence is Keratin, type I cytoskeletal 40 (439 aa).

The head stretch occupies residues Met1–Glu89. The region spanning Glu89–Leu400 is the IF rod domain. The tract at residues Lys90–Gln124 is coil 1A. A linker 1 region spans residues Cys125–Asp135. The segment at Tyr136–Glu236 is coil 1B. Positions Gln237–Val252 are linker 12. The interval Asp253–Glu396 is coil 2. The tail stretch occupies residues Asp397–Ala439.

It belongs to the intermediate filament family. Heterotetramer of two type I and two type II keratins.

May play a role in late hair differentiation. This is Keratin, type I cytoskeletal 40 (Krt40) from Mus musculus (Mouse).